Consider the following 202-residue polypeptide: Small ribosomal subunit protein uS4 (202 aa).

Positions 22–43 (TRKSARRAYPPGQHGQNRRKRS) are disordered. The S4 RNA-binding domain occupies 90 to 152 (MRLDNTVFRL…EKSKEMVKTN (63 aa)).

Belongs to the universal ribosomal protein uS4 family. As to quaternary structure, part of the 30S ribosomal subunit. Contacts protein S5. The interaction surface between S4 and S5 is involved in control of translational fidelity.

Functionally, one of the primary rRNA binding proteins, it binds directly to 16S rRNA where it nucleates assembly of the body of the 30S subunit. Its function is as follows. With S5 and S12 plays an important role in translational accuracy. This chain is Small ribosomal subunit protein uS4, found in Trichodesmium erythraeum (strain IMS101).